Reading from the N-terminus, the 342-residue chain is Serpentine receptor class beta-16 (342 aa).

Topologically, residues Met1 to Gln22 are extracellular. A helical membrane pass occupies residues Ile23–Ile43. Residues Lys44 to Thr61 are Cytoplasmic-facing. The helical transmembrane segment at Met62–Ile82 threads the bilayer. The Extracellular segment spans residues Glu83 to Ala102. Residues Ile103 to Val123 traverse the membrane as a helical segment. Residues Ile124–Ser141 are Cytoplasmic-facing. A helical transmembrane segment spans residues Phe142–Trp162. Over Ala163–Leu187 the chain is Extracellular. A helical transmembrane segment spans residues Asn188–Val208. The Cytoplasmic segment spans residues Arg209 to Thr237. Residues Phe238 to Phe258 form a helical membrane-spanning segment. The Extracellular portion of the chain corresponds to Thr259–Ala274. Residues Leu275–Ile295 form a helical membrane-spanning segment. Residues Ser296–Lys342 are Cytoplasmic-facing.

This sequence belongs to the nematode receptor-like protein srb family. Expressed throughout the nervous system, in pharyngeal muscle, hermaphrodite vulval muscles and in the male tail. Not expressed in male somatic gonads or sperm.

The protein resides in the cell membrane. Its subcellular location is the perikaryon. It localises to the cell projection. It is found in the dendrite. Its function is as follows. G-protein coupled receptor. Plays a role in the navigational capacity of sperm and promotes the targeting of sperm derived from males to the fertilization site in the uterus of hermaphrodites. This Caenorhabditis elegans protein is Serpentine receptor class beta-16.